Here is a 115-residue protein sequence, read N- to C-terminus: Large ribosomal subunit protein bL19 (115 aa).

This sequence belongs to the bacterial ribosomal protein bL19 family.

In terms of biological role, this protein is located at the 30S-50S ribosomal subunit interface and may play a role in the structure and function of the aminoacyl-tRNA binding site. This chain is Large ribosomal subunit protein bL19, found in Parabacteroides distasonis (strain ATCC 8503 / DSM 20701 / CIP 104284 / JCM 5825 / NCTC 11152).